The chain runs to 141 residues: Hemoglobin subunit alpha (141 aa).

The Globin domain maps to 1-141 (VLSADDKANV…VSTVLTSKYR (141 aa)). Position 3 is a phosphoserine (Ser-3). An N6-succinyllysine mark is found at Lys-7 and Lys-11. Lys-16 is modified (N6-acetyllysine; alternate). Position 16 is an N6-succinyllysine; alternate (Lys-16). A Phosphotyrosine modification is found at Tyr-24. The residue at position 35 (Ser-35) is a Phosphoserine. Lys-40 is modified (N6-succinyllysine). Ser-49 bears the Phosphoserine mark. His-58 is an O2 binding site. A heme b-binding site is contributed by His-87. Ser-102 carries the phosphoserine modification. Thr-108 carries the post-translational modification Phosphothreonine. Phosphoserine occurs at positions 124 and 131. Residues Thr-134 and Thr-137 each carry the phosphothreonine modification. At Ser-138 the chain carries Phosphoserine.

It belongs to the globin family. As to quaternary structure, heterotetramer of two alpha chains and two beta chains. As to expression, red blood cells.

In terms of biological role, involved in oxygen transport from the lung to the various peripheral tissues. The sequence is that of Hemoglobin subunit alpha from Peromyscus californicus (California mouse).